We begin with the raw amino-acid sequence, 266 residues long: Luciferase (266 aa).

The helical transmembrane segment at Gly22–Ile41 threads the bilayer.

This sequence belongs to the fungal luciferase family.

It localises to the membrane. It catalyses the reaction 3-hydroxyhispidin + O2 = (E)-caffeoylpyruvate + hnu + CO2. It carries out the reaction 3-hydroxyhispidin + O2 = 4-[(E)-2-(3,4-dihydroxyphenyl)ethenyl]-1,7-dihydroxy-2,3,5-trioxabicyclo[2.2.2]oct-7-en-6-one. Its function is as follows. Luciferase; part of the gene cluster that mediates the fungal bioluminescence cycle. Uses the fungal luciferin 3-hydroxyhispidin as a substrate to produce an endoperoxide as a high-energy intermediate with decomposition that yields oxyluciferin (also known as caffeoylpyruvate) and light emission. The fungal bioluminescence cycle begins with the hispidin synthetase that catalyzes the formation of hispidin which is further hydroxylated by the hispidin-3-hydroxylase, yielding the fungal luciferin 3-hydroxyhispidin. The luciferase then produces an endoperoxide as a high-energy intermediate with decomposition that yields oxyluciferin and light emission. Oxyluciferin can be recycled to caffeic acid by caffeoylpyruvate hydrolase. The protein is Luciferase of Armillaria ostoyae (Armillaria root rot fungus).